A 90-amino-acid polypeptide reads, in one-letter code: YcgL domain-containing protein plu2139 (90 aa).

A YcgL domain is found at 1–85; the sequence is MICAIYSSPK…PVENLMNAHL (85 aa).

This is YcgL domain-containing protein plu2139 from Photorhabdus laumondii subsp. laumondii (strain DSM 15139 / CIP 105565 / TT01) (Photorhabdus luminescens subsp. laumondii).